The primary structure comprises 304 residues: Recombination-associated protein RdgC (304 aa).

It belongs to the RdgC family.

The protein localises to the cytoplasm. It is found in the nucleoid. Its function is as follows. May be involved in recombination. The polypeptide is Recombination-associated protein RdgC (Shewanella sp. (strain W3-18-1)).